The primary structure comprises 388 residues: Leucine aminopeptidase 1 (388 aa).

The signal sequence occupies residues 1–19 (MKVLTAIALSAIAFTGAVA). A propeptide spanning residues 20–88 (AVITQEAFLN…YPTLHSASYV (69 aa)) is cleaved from the precursor. N-linked (GlcNAc...) asparagine glycans are attached at residues Asn-106 and Asn-180. His-188 and Asp-207 together coordinate Zn(2+). Residue Asn-232 is glycosylated (N-linked (GlcNAc...) asparagine). Residues Glu-246 and Asp-273 each contribute to the Zn(2+) site. Cys-322 and Cys-326 are oxidised to a cystine. His-355 provides a ligand contact to Zn(2+).

Belongs to the peptidase M28 family. M28E subfamily. Monomer. The cofactor is Zn(2+).

It is found in the secreted. In terms of biological role, extracellular aminopeptidase that allows assimilation of proteinaceous substrates and which contributes to pathogenicity. The sequence is that of Leucine aminopeptidase 1 (lap1) from Aspergillus fumigatus (strain CBS 144.89 / FGSC A1163 / CEA10) (Neosartorya fumigata).